We begin with the raw amino-acid sequence, 235 residues long: Sugar fermentation stimulation protein homolog (235 aa).

Belongs to the SfsA family.

The protein is Sugar fermentation stimulation protein homolog of Aliivibrio fischeri (strain MJ11) (Vibrio fischeri).